Consider the following 132-residue polypeptide: Small ribosomal subunit protein uS8 (132 aa).

It belongs to the universal ribosomal protein uS8 family. As to quaternary structure, part of the 30S ribosomal subunit. Contacts proteins S5 and S12.

In terms of biological role, one of the primary rRNA binding proteins, it binds directly to 16S rRNA central domain where it helps coordinate assembly of the platform of the 30S subunit. The sequence is that of Small ribosomal subunit protein uS8 from Xanthomonas campestris pv. campestris (strain 8004).